The sequence spans 176 residues: CASP-like protein 5A1 (176 aa).

Residues 1–35 (MNPSHPAVHPVEAPPTDVHHAPRVRMKDYQGMPGT) lie on the Cytoplasmic side of the membrane. The helical transmembrane segment at 36–56 (LGGLALRLGQFCFAVVAFSIM) threads the bilayer. Residues 57-67 (LSTDDFSTVTA) are Extracellular-facing. A helical transmembrane segment spans residues 68 to 88 (FCYLVAATVLQCLWSLALAVI). At 89–102 (DGYALLVKRSLRNS) the chain is on the cytoplasmic side. A helical transmembrane segment spans residues 103 to 123 (LVVSLFVVGDGVTATLTFAAA). At 124–152 (CASAGITVLIGNDLRECDQNHCGKYETAT) the chain is on the extracellular side. Residues 153–173 (AMAFLSWFMVSPSFLLTFWLL) traverse the membrane as a helical segment. The Cytoplasmic segment spans residues 174–176 (ASR).

Belongs to the Casparian strip membrane proteins (CASP) family. In terms of assembly, homodimer and heterodimers.

The protein localises to the cell membrane. In Ginkgo biloba (Ginkgo), this protein is CASP-like protein 5A1.